A 293-amino-acid polypeptide reads, in one-letter code: Small ribosomal subunit protein uS2 (293 aa).

The interval 239–293 (PAGGADWEAAPAGFPAAATGEWSEAQPATWESGAAAATGPSTEWADSAPKDTAGW) is disordered. The segment covering 247-256 (AAPAGFPAAA) has biased composition (low complexity).

It belongs to the universal ribosomal protein uS2 family. Component of the small ribosomal subunit. Mature ribosomes consist of a small (40S) and a large (60S) subunit. The 40S subunit contains about 33 different proteins and 1 molecule of RNA (18S). The 60S subunit contains about 49 different proteins and 3 molecules of RNA (25S, 5.8S and 5S). Interacts with RPS21.

The protein resides in the cytoplasm. In terms of biological role, required for the assembly and/or stability of the 40S ribosomal subunit. Required for the processing of the 20S rRNA-precursor to mature 18S rRNA in a late step of the maturation of 40S ribosomal subunits. The protein is Small ribosomal subunit protein uS2 of Chaetomium globosum (strain ATCC 6205 / CBS 148.51 / DSM 1962 / NBRC 6347 / NRRL 1970) (Soil fungus).